Reading from the N-terminus, the 393-residue chain is Telomeric repeat-binding factor 2-interacting protein 1 (393 aa).

An N-acetylalanine modification is found at Ala-2. Phosphoserine occurs at positions 36 and 43. Positions Phe-78 to Leu-101 constitute a BRCT domain. Positions Thr-104–Ala-132 are disordered. Lys-111 participates in a covalent cross-link: Glycyl lysine isopeptide (Lys-Gly) (interchain with G-Cter in SUMO2). One can recognise a Myb-like domain in the interval Gln-125–Leu-185. Phosphoserine occurs at positions 151 and 153. Residue Lys-191 forms a Glycyl lysine isopeptide (Lys-Gly) (interchain with G-Cter in SUMO2) linkage. The tract at residues Leu-193–Glu-304 is disordered. Phosphoserine occurs at positions 200 and 203. Glycyl lysine isopeptide (Lys-Gly) (interchain with G-Cter in SUMO2) cross-links involve residues Lys-205, Lys-209, and Lys-237. Over residues Gln-223–Glu-252 the composition is skewed to basic and acidic residues. The span at Thr-282–Glu-297 shows a compositional bias: acidic residues. Lys-366 participates in a covalent cross-link: Glycyl lysine isopeptide (Lys-Gly) (interchain with G-Cter in SUMO2). The Nuclear localization signal motif lies at Lys-377–Lys-393.

It belongs to the RAP1 family. In terms of assembly, homodimer. Component of the shelterin complex (telosome) composed of TERF1, TERF2, TINF2, TERF2IP ACD and POT1. Binds to TERF2 (but not TERF1) with its C-terminus. Interacts with SLX4/BTBD12. Interacts with TERF2; the interaction is direct. Does not interact with TERF1. Associates with the I-kappa-B-kinase (IKK) core complex, composed of CHUK, IKBKB and IKBKG.

The protein resides in the nucleus. Its subcellular location is the cytoplasm. The protein localises to the chromosome. It is found in the telomere. In terms of biological role, acts both as a regulator of telomere function and as a transcription regulator. Involved in the regulation of telomere length and protection as a component of the shelterin complex (telosome). In contrast to other components of the shelterin complex, it is dispensible for telomere capping and does not participate in the protection of telomeres against non-homologous end-joining (NHEJ)-mediated repair. Instead, it is required to negatively regulate telomere recombination and is essential for repressing homology-directed repair (HDR), which can affect telomere length. Does not bind DNA directly: recruited to telomeric double-stranded 5'-TTAGGG-3' repeats via its interaction with TERF2. Independently of its function in telomeres, also acts as a transcription regulator: recruited to extratelomeric 5'-TTAGGG-3' sites via its association with TERF2 or other factors, and regulates gene expression. When cytoplasmic, associates with the I-kappa-B-kinase (IKK) complex and acts as a regulator of the NF-kappa-B signaling by promoting IKK-mediated phosphorylation of RELA/p65, leading to activate expression of NF-kappa-B target genes. The polypeptide is Telomeric repeat-binding factor 2-interacting protein 1 (Terf2ip) (Mus musculus (Mouse)).